The chain runs to 257 residues: Nickel import system ATP-binding protein NikD (257 aa).

Residues 4 to 245 (IDIQNLTIKN…HLHPYTEQLI (242 aa)) form the ABC transporter domain. ATP is bound at residue 37 to 44 (GESGAGKS).

It belongs to the ABC transporter superfamily. As to quaternary structure, the complex is composed of two ATP-binding proteins (NikD and NikE), two transmembrane proteins (NikB and NikC) and a solute-binding protein (NikA).

It localises to the cell membrane. The catalysed reaction is Ni(2+)(out) + ATP + H2O = Ni(2+)(in) + ADP + phosphate + H(+). In terms of biological role, part of the ABC transporter complex NikABCDE (Opp2) involved in nickel import. Probably responsible for energy coupling to the transport system. The polypeptide is Nickel import system ATP-binding protein NikD (Staphylococcus aureus (strain bovine RF122 / ET3-1)).